A 300-amino-acid chain; its full sequence is Acetylglutamate kinase (300 aa).

Substrate is bound by residues 68-69 (GG), Arg-90, and Asn-195.

Belongs to the acetylglutamate kinase family. ArgB subfamily.

It localises to the cytoplasm. The enzyme catalyses N-acetyl-L-glutamate + ATP = N-acetyl-L-glutamyl 5-phosphate + ADP. It participates in amino-acid biosynthesis; L-arginine biosynthesis; N(2)-acetyl-L-ornithine from L-glutamate: step 2/4. Functionally, catalyzes the ATP-dependent phosphorylation of N-acetyl-L-glutamate. This chain is Acetylglutamate kinase, found in Stutzerimonas stutzeri (strain A1501) (Pseudomonas stutzeri).